The following is a 214-amino-acid chain: Probable transaldolase (214 aa).

The active-site Schiff-base intermediate with substrate is the lysine 83.

This sequence belongs to the transaldolase family. Type 3B subfamily.

The protein resides in the cytoplasm. It carries out the reaction D-sedoheptulose 7-phosphate + D-glyceraldehyde 3-phosphate = D-erythrose 4-phosphate + beta-D-fructose 6-phosphate. The protein operates within carbohydrate degradation; pentose phosphate pathway; D-glyceraldehyde 3-phosphate and beta-D-fructose 6-phosphate from D-ribose 5-phosphate and D-xylulose 5-phosphate (non-oxidative stage): step 2/3. Transaldolase is important for the balance of metabolites in the pentose-phosphate pathway. The sequence is that of Probable transaldolase (tal) from Streptococcus pyogenes serotype M1.